A 31-amino-acid polypeptide reads, in one-letter code: Cytochrome b6-f complex subunit 6 (31 aa).

Residues 4 to 24 (ITSYFGFLLAALTLTLALFIG) form a helical membrane-spanning segment.

The protein belongs to the PetL family. The 4 large subunits of the cytochrome b6-f complex are cytochrome b6, subunit IV (17 kDa polypeptide, PetD), cytochrome f and the Rieske protein, while the 4 small subunits are PetG, PetL, PetM and PetN. The complex functions as a dimer.

Its subcellular location is the plastid. It is found in the chloroplast thylakoid membrane. Functionally, component of the cytochrome b6-f complex, which mediates electron transfer between photosystem II (PSII) and photosystem I (PSI), cyclic electron flow around PSI, and state transitions. PetL is important for photoautotrophic growth as well as for electron transfer efficiency and stability of the cytochrome b6-f complex. The polypeptide is Cytochrome b6-f complex subunit 6 (Oryza sativa subsp. japonica (Rice)).